A 218-amino-acid polypeptide reads, in one-letter code: Alkylmercury lyase (218 aa).

The protein belongs to the MerB family.

It carries out the reaction an alkylmercury + H(+) = an alkane + Hg(2+). Functionally, cleaves the carbon-mercury bond of organomercurials such as phenylmercuric acetate. One product is Hg(2+), which is subsequently detoxified by the mercuric reductase. In Bacillus cereus, this protein is Alkylmercury lyase (merB1).